A 308-amino-acid chain; its full sequence is tRNA pseudouridine synthase B (308 aa).

D37 functions as the Nucleophile in the catalytic mechanism.

This sequence belongs to the pseudouridine synthase TruB family. Type 1 subfamily.

The enzyme catalyses uridine(55) in tRNA = pseudouridine(55) in tRNA. In terms of biological role, responsible for synthesis of pseudouridine from uracil-55 in the psi GC loop of transfer RNAs. In Deinococcus radiodurans (strain ATCC 13939 / DSM 20539 / JCM 16871 / CCUG 27074 / LMG 4051 / NBRC 15346 / NCIMB 9279 / VKM B-1422 / R1), this protein is tRNA pseudouridine synthase B.